A 515-amino-acid chain; its full sequence is 1-pyrroline-5-carboxylate dehydrogenase (515 aa).

Active-site residues include glutamate 286 and cysteine 320.

The protein belongs to the aldehyde dehydrogenase family. RocA subfamily.

The enzyme catalyses L-glutamate 5-semialdehyde + NAD(+) + H2O = L-glutamate + NADH + 2 H(+). The protein operates within amino-acid degradation; L-proline degradation into L-glutamate; L-glutamate from L-proline: step 2/2. The polypeptide is 1-pyrroline-5-carboxylate dehydrogenase (Anoxybacillus flavithermus (strain DSM 21510 / WK1)).